Here is a 395-residue protein sequence, read N- to C-terminus: Subtilisin-like protease 5 (395 aa).

The N-terminal stretch at 1-19 (MGFLTVLYLSLAALSVTNA) is a signal peptide. Positions 20–115 (AQIMSAPNGA…VEPDAIISQH (96 aa)) are excised as a propeptide. The Inhibitor I9 domain maps to 36–112 (YIVVMKDDTS…VAFVEPDAII (77 aa)). A Peptidase S8 domain is found at 124–395 (PWGLSRLSNR…RRLLYNGSGR (272 aa)). Active-site charge relay system residues include Asp-155 and His-186. N-linked (GlcNAc...) asparagine glycosylation is found at Asn-229 and Asn-247. Ser-341 serves as the catalytic Charge relay system. A disordered region spans residues 374 to 395 (QPTIHNPGPDTTRRLLYNGSGR). N-linked (GlcNAc...) asparagine glycosylation is present at Asn-391.

Belongs to the peptidase S8 family.

The protein localises to the secreted. Functionally, secreted subtilisin-like serine protease with keratinolytic activity that contributes to pathogenicity. The polypeptide is Subtilisin-like protease 5 (SUB5) (Arthroderma otae (strain ATCC MYA-4605 / CBS 113480) (Microsporum canis)).